A 658-amino-acid polypeptide reads, in one-letter code: NADPH-dependent diflavin oxidoreductase 1 (658 aa).

The Flavodoxin-like domain occupies L16–W160. Residues T22–S27, S69–G72, L107–C116, and D142 contribute to the FMN site. The FAD-binding FR-type domain occupies Q215–P502. FAD is bound by residues R400, R430–S433, and G474–T477. NADP(+) is bound by residues T514, S574–R575, and K580–Q584. FAD is bound at residue W657.

It belongs to the NADPH-dependent diflavin oxidoreductase NDOR1 family. This sequence in the N-terminal section; belongs to the flavodoxin family. In the C-terminal section; belongs to the flavoprotein pyridine nucleotide cytochrome reductase family. Interacts with DRE2; as part of the cytosolic iron-sulfur (Fe-S) protein assembly (CIA) machinery. Requires FAD as cofactor. FMN serves as cofactor.

Its subcellular location is the cytoplasm. It is found in the mitochondrion. It catalyses the reaction 2 oxidized [2Fe-2S]-[protein] + NADPH = 2 reduced [2Fe-2S]-[protein] + NADP(+) + H(+). In terms of biological role, NADPH-dependent reductase which is a central component of the cytosolic iron-sulfur (Fe-S) protein assembly (CIA) machinery. Transfers electrons from NADPH via its FAD and FMN prosthetic groups to the [2Fe-2S] cluster of DRE2, another key component of the CIA machinery. In turn, this reduced cluster provides electrons for assembly of cytosolic iron-sulfur cluster proteins. Positively controls H(2)O(2)-induced cell death. In Mycosarcoma maydis (Corn smut fungus), this protein is NADPH-dependent diflavin oxidoreductase 1.